A 251-amino-acid polypeptide reads, in one-letter code: Triosephosphate isomerase (251 aa).

9-11 (NWK) provides a ligand contact to substrate. The Electrophile role is filled by His95. The active-site Proton acceptor is the Glu167. Substrate is bound by residues Gly173, Ser213, and 234 to 235 (GG).

It belongs to the triosephosphate isomerase family. In terms of assembly, homodimer.

Its subcellular location is the cytoplasm. It carries out the reaction D-glyceraldehyde 3-phosphate = dihydroxyacetone phosphate. It functions in the pathway carbohydrate biosynthesis; gluconeogenesis. Its pathway is carbohydrate degradation; glycolysis; D-glyceraldehyde 3-phosphate from glycerone phosphate: step 1/1. In terms of biological role, involved in the gluconeogenesis. Catalyzes stereospecifically the conversion of dihydroxyacetone phosphate (DHAP) to D-glyceraldehyde-3-phosphate (G3P). The sequence is that of Triosephosphate isomerase from Enterococcus faecalis (strain ATCC 700802 / V583).